A 296-amino-acid polypeptide reads, in one-letter code: MFS-type transporter pytF (296 aa).

A run of 7 helical transmembrane segments spans residues 30-50 (WLVVLGGFLAYFVTFGMLNSF), 72-92 (WIGSLQLFLLFIGGLFFGPVF), 98-118 (KVLFIPGTLLLSLSQMMVSLC), 124-144 (FILAQSLLFGIAVAMLFYPTI), 157-177 (LAMGIVLTGSSLGGIAWPLIL), 180-200 (LFAVVGFPWGLRIVGFISFAL), and 238-258 (VVGMLFVIWGMFIPFYYIPLF). Residue Asn-265 is glycosylated (N-linked (GlcNAc...) asparagine). The chain crosses the membrane as a helical span at residues 271–291 (SLISILNAGSFVGRIVSGALA).

The protein belongs to the major facilitator superfamily. Monocarboxylate porter (TC 2.A.1.13) family.

The protein resides in the cell membrane. Its function is as follows. MFS-type transporter; part of the gene cluster that mediates the biosynthesis of pyranterreones, a family of antioxidative compounds. Directly involved in the secretion of pyranterreones. This Aspergillus terreus (strain NIH 2624 / FGSC A1156) protein is MFS-type transporter pytF.